Reading from the N-terminus, the 199-residue chain is Pyridoxine/pyridoxamine 5'-phosphate oxidase (199 aa).

FMN is bound by residues R44–K49, Y59–T60, K66, and Q91. Residue K49 coordinates substrate. The substrate site is built by Y109, R113, and S117. FMN-binding positions include Q126–S127 and W171. Position 177 to 179 (R177 to H179) interacts with substrate. R181 contacts FMN.

This sequence belongs to the pyridoxamine 5'-phosphate oxidase family. In terms of assembly, homodimer. The cofactor is FMN.

It catalyses the reaction pyridoxamine 5'-phosphate + O2 + H2O = pyridoxal 5'-phosphate + H2O2 + NH4(+). The enzyme catalyses pyridoxine 5'-phosphate + O2 = pyridoxal 5'-phosphate + H2O2. Its pathway is cofactor metabolism; pyridoxal 5'-phosphate salvage; pyridoxal 5'-phosphate from pyridoxamine 5'-phosphate: step 1/1. It functions in the pathway cofactor metabolism; pyridoxal 5'-phosphate salvage; pyridoxal 5'-phosphate from pyridoxine 5'-phosphate: step 1/1. Functionally, catalyzes the oxidation of either pyridoxine 5'-phosphate (PNP) or pyridoxamine 5'-phosphate (PMP) into pyridoxal 5'-phosphate (PLP). This chain is Pyridoxine/pyridoxamine 5'-phosphate oxidase, found in Xanthomonas euvesicatoria pv. vesicatoria (strain 85-10) (Xanthomonas campestris pv. vesicatoria).